We begin with the raw amino-acid sequence, 467 residues long: Glutamate--tRNA ligase (467 aa).

The short motif at 9–19 is the 'HIGH' region element; that stretch reads PSPTGYLHIGG. The short motif at 237 to 241 is the 'KMSKS' region element; the sequence is KLSKR. K240 contacts ATP.

This sequence belongs to the class-I aminoacyl-tRNA synthetase family. Glutamate--tRNA ligase type 1 subfamily. In terms of assembly, monomer.

It localises to the cytoplasm. The enzyme catalyses tRNA(Glu) + L-glutamate + ATP = L-glutamyl-tRNA(Glu) + AMP + diphosphate. Its function is as follows. Catalyzes the attachment of glutamate to tRNA(Glu) in a two-step reaction: glutamate is first activated by ATP to form Glu-AMP and then transferred to the acceptor end of tRNA(Glu). This is Glutamate--tRNA ligase from Xanthomonas oryzae pv. oryzae (strain MAFF 311018).